Consider the following 380-residue polypeptide: Cytochrome b (380 aa).

Helical transmembrane passes span 33–53, 77–98, 113–133, and 178–198; these read FGSLLGLCLITQILTGLFLAM, WLIRNIHANGASFFFICIYLHI, WNVGVILLLLVMMTAFVGYVL, and FFAFHFLFPFVIAAATVIHLI. Residues H83 and H97 each contribute to the heme b site. The heme b site is built by H182 and H196. H201 contributes to the a ubiquinone binding site. The next 4 helical transmembrane spans lie at 226–246, 288–308, 320–340, and 347–367; these read YKDLLGFAALLIALAALALFS, LGGVLALLFSILILMLVPILH, FSQFLFWSLVADVMILTWIGG, and FVIIGQVASFLYFFLFLVMIP.

The protein belongs to the cytochrome b family. In terms of assembly, the cytochrome bc1 complex contains 3 respiratory subunits (MT-CYB, CYC1 and UQCRFS1), 2 core proteins (UQCRC1 and UQCRC2) and probably 6 low-molecular weight proteins. Heme b is required as a cofactor.

The protein resides in the mitochondrion inner membrane. Its function is as follows. Component of the ubiquinol-cytochrome c reductase complex (complex III or cytochrome b-c1 complex) that is part of the mitochondrial respiratory chain. The b-c1 complex mediates electron transfer from ubiquinol to cytochrome c. Contributes to the generation of a proton gradient across the mitochondrial membrane that is then used for ATP synthesis. In Paralichthys olivaceus (Bastard halibut), this protein is Cytochrome b (mt-cyb).